The sequence spans 280 residues: Mediator of RNA polymerase II transcription subunit 2 (280 aa).

Residues 212–247 (GLQNTSGGNEKKNDPQINFNDTNAPPSAVNVPENGN) form a disordered region. A compositionally biased stretch (polar residues) spans 226–236 (PQINFNDTNAP).

Belongs to the Mediator complex subunit 2 family. As to quaternary structure, component of the Mediator complex.

The protein resides in the nucleus. Its function is as follows. Component of the Mediator complex, a coactivator involved in the regulated transcription of nearly all RNA polymerase II-dependent genes. Mediator functions as a bridge to convey information from gene-specific regulatory proteins to the basal RNA polymerase II transcription machinery. Mediator is recruited to promoters by direct interactions with regulatory proteins and serves as a scaffold for the assembly of a functional preinitiation complex with RNA polymerase II and the general transcription factors. This is Mediator of RNA polymerase II transcription subunit 2 (MED2) from Kluyveromyces lactis (strain ATCC 8585 / CBS 2359 / DSM 70799 / NBRC 1267 / NRRL Y-1140 / WM37) (Yeast).